A 471-amino-acid chain; its full sequence is Anthocyanidin 3-O-glucosyltransferase (471 aa).

Residue His24 is the Proton acceptor of the active site. Position 24 (His24) interacts with an anthocyanidin. Residue Asp130 is the Charge relay of the active site. Residue Thr152 coordinates UDP-alpha-D-glucose. His161 provides a ligand contact to an anthocyanidin. Residues Ala352, Gln354, His369, Trp372, Ser374, and Glu377 each contribute to the UDP-alpha-D-glucose site. An anthocyanidin is bound at residue Gly392. The UDP-alpha-D-glucose site is built by Asp393 and Gln394.

The protein belongs to the UDP-glycosyltransferase family.

It catalyses the reaction an anthocyanidin + UDP-alpha-D-glucose + H(+) = an anthocyanidin 3-O-beta-D-glucoside + UDP. It participates in pigment biosynthesis; anthocyanin biosynthesis. In the presence of other necessary color factors, this glycosylation reaction allows the accumulation of anthocyanin pigments. The sequence is that of Anthocyanidin 3-O-glucosyltransferase (BZ1) from Zea mays (Maize).